The primary structure comprises 427 residues: MESLTLQPIARVDGTINLPGSKSVSNRALLLAALAHGKTVLTNLLDSDDVRHMLNALTALGVSYTLSADRTRCEIIGNGGPLHAEGALELFLGNAGTAMRPLAAALCLGSNDIVLTGEPRMKERPIGHLVDALRLGGAKITYLEQENYPPLRLQGGFTGGNVDVDGSVSSQFLTALLMTAPLAPEDTVIRIKGDLVSKPYIDITLNLMKTFGVEIENQHYQQFVVKGGQSYQSPGTYLVEGDASSASYFLAAAAIKGGTVKVTGIGRNSMQGDIRFADVLEKMGATICWGDDYISCTRGELNAIDMDMNHIPDAAMTIATAALFAKGTTTLRNIYNWRVKETDRLFAMATELRKVGAEVEEGHDYIRITPPEKLNFAEIATYNDHRMAMCFSLVALSDTPVTILDPKCTAKTFPDYFEQLARISQAA.

3-phosphoshikimate contacts are provided by Lys22, Ser23, and Arg27. Residue Lys22 coordinates phosphoenolpyruvate. Phosphoenolpyruvate contacts are provided by Gly96 and Arg124. Positions 169, 170, 171, 197, 313, 336, and 340 each coordinate 3-phosphoshikimate. Gln171 is a phosphoenolpyruvate binding site. Asp313 functions as the Proton acceptor in the catalytic mechanism. 3 residues coordinate phosphoenolpyruvate: Arg344, Arg386, and Lys411.

Belongs to the EPSP synthase family. Monomer.

It localises to the cytoplasm. It catalyses the reaction 3-phosphoshikimate + phosphoenolpyruvate = 5-O-(1-carboxyvinyl)-3-phosphoshikimate + phosphate. The protein operates within metabolic intermediate biosynthesis; chorismate biosynthesis; chorismate from D-erythrose 4-phosphate and phosphoenolpyruvate: step 6/7. Functionally, catalyzes the transfer of the enolpyruvyl moiety of phosphoenolpyruvate (PEP) to the 5-hydroxyl of shikimate-3-phosphate (S3P) to produce enolpyruvyl shikimate-3-phosphate and inorganic phosphate. This chain is 3-phosphoshikimate 1-carboxyvinyltransferase, found in Escherichia coli O8 (strain IAI1).